A 268-amino-acid chain; its full sequence is Cytochrome c oxidase subunit 3 (268 aa).

7 helical membrane passes run 19-39 (PWPI…VLTM), 49-69 (FDLG…DIVI), 85-105 (LIIG…SVFW), 124-144 (PVGI…IILL), 165-185 (SIIG…FQAF), 202-222 (VFFA…LFLF), and 245-265 (ILYW…VYFW).

It belongs to the cytochrome c oxidase subunit 3 family. In terms of assembly, component of the cytochrome c oxidase (complex IV, CIV), a multisubunit enzyme composed of a catalytic core of 3 subunits and several supernumerary subunits. The complex exists as a monomer or a dimer and forms supercomplexes (SCs) in the inner mitochondrial membrane with ubiquinol-cytochrome c oxidoreductase (cytochrome b-c1 complex, complex III, CIII).

It is found in the mitochondrion inner membrane. It catalyses the reaction 4 Fe(II)-[cytochrome c] + O2 + 8 H(+)(in) = 4 Fe(III)-[cytochrome c] + 2 H2O + 4 H(+)(out). In terms of biological role, component of the cytochrome c oxidase, the last enzyme in the mitochondrial electron transport chain which drives oxidative phosphorylation. The respiratory chain contains 3 multisubunit complexes succinate dehydrogenase (complex II, CII), ubiquinol-cytochrome c oxidoreductase (cytochrome b-c1 complex, complex III, CIII) and cytochrome c oxidase (complex IV, CIV), that cooperate to transfer electrons derived from NADH and succinate to molecular oxygen, creating an electrochemical gradient over the inner membrane that drives transmembrane transport and the ATP synthase. Cytochrome c oxidase is the component of the respiratory chain that catalyzes the reduction of oxygen to water. Electrons originating from reduced cytochrome c in the intermembrane space (IMS) are transferred via the dinuclear copper A center (CU(A)) of subunit 2 and heme A of subunit 1 to the active site in subunit 1, a binuclear center (BNC) formed by heme A3 and copper B (CU(B)). The BNC reduces molecular oxygen to 2 water molecules using 4 electrons from cytochrome c in the IMS and 4 protons from the mitochondrial matrix. In Schizophyllum commune (Split gill fungus), this protein is Cytochrome c oxidase subunit 3 (COIII).